The chain runs to 243 residues: L-fucose operon activator (243 aa).

The 57-residue stretch at 1 to 57 (MKAARQQAIVDLLLNHTSLTTEALSEQLKVSKETIRRDLNELQTQGKILRNHGRAKY) folds into the HTH deoR-type domain. Positions 19-38 (LTTEALSEQLKVSKETIRRD) form a DNA-binding region, H-T-H motif.

Its function is as follows. Transcriptional activator of the fuc operon. The polypeptide is L-fucose operon activator (fucR) (Escherichia coli (strain K12)).